Here is a 273-residue protein sequence, read N- to C-terminus: Undecaprenyl-diphosphatase (273 aa).

7 helical membrane-spanning segments follow: residues 48–68 (AANT…VVVF), 89–109 (LTLL…VLFE), 116–136 (LFST…MIVA), 152–172 (ITYK…WPGF), 193–213 (ADFT…LSLL), 222–242 (ADIP…LLAI), and 252–272 (IRLV…YFLY).

Belongs to the UppP family.

It is found in the cell membrane. The enzyme catalyses di-trans,octa-cis-undecaprenyl diphosphate + H2O = di-trans,octa-cis-undecaprenyl phosphate + phosphate + H(+). Functionally, catalyzes the dephosphorylation of undecaprenyl diphosphate (UPP). Confers resistance to bacitracin. This chain is Undecaprenyl-diphosphatase, found in Geobacillus thermodenitrificans (strain NG80-2).